We begin with the raw amino-acid sequence, 303 residues long: Quinolinate synthase (303 aa).

2 residues coordinate iminosuccinate: His25 and Ser42. Cys87 is a [4Fe-4S] cluster binding site. Iminosuccinate contacts are provided by residues 113–115 (YVN) and Ser130. Cys173 is a binding site for [4Fe-4S] cluster. Iminosuccinate is bound by residues 199–201 (HPE) and Thr216. Cys261 serves as a coordination point for [4Fe-4S] cluster.

This sequence belongs to the quinolinate synthase family. Type 2 subfamily. [4Fe-4S] cluster serves as cofactor.

Its subcellular location is the cytoplasm. The catalysed reaction is iminosuccinate + dihydroxyacetone phosphate = quinolinate + phosphate + 2 H2O + H(+). Its pathway is cofactor biosynthesis; NAD(+) biosynthesis; quinolinate from iminoaspartate: step 1/1. Catalyzes the condensation of iminoaspartate with dihydroxyacetone phosphate to form quinolinate. The sequence is that of Quinolinate synthase from Desulforudis audaxviator (strain MP104C).